The primary structure comprises 639 residues: Far upstream element-binding protein 1 (639 aa).

2 disordered regions span residues 1 to 27 (MADY…NDAF) and 40 to 88 (KIGG…LPPM). Alanine 2 carries the N-acetylalanine modification. Gly residues predominate over residues 14–23 (SAGGGGGGGV). A phosphoserine mark is found at serine 48 and serine 51. Basic and acidic residues predominate over residues 61-73 (RPLEDGDQPDAKK). KH domains are found at residues 95-159 (VMTE…KRLL), 180-246 (NAVQ…KEMV), and 270-334 (NEGI…AEII). Serine 135 is subject to Phosphoserine. At threonine 148 the chain carries Phosphothreonine. Omega-N-methylarginine is present on residues arginine 316, arginine 354, arginine 356, and arginine 358. Residues 341–360 (VQAGNPGGPGPGGRGRGRGQ) are disordered. Gly residues predominate over residues 345–360 (NPGGPGPGGRGRGRGQ). One can recognise a KH 4 domain in the interval 371 to 438 (LQEFNFIVPT…QQIDYARQLI (68 aa)). Threonine 427 carries the phosphothreonine modification. Disordered regions lie at residues 442 to 527 (IGGP…GTDP) and 543 to 574 (QAQP…PAGQ). A compositionally biased stretch (pro residues) spans 463–500 (PHGPPGPPGPGTPMGPYNPAPYNPGPPGPAPHGPPAPY). The segment covering 551–568 (PAGAPTTTQTNGQGDQQN) has biased composition (low complexity). Serine 625 carries the post-translational modification Phosphoserine.

Found in a complex with PUF60 and far upstream element (FUSE) DNA segment. Interacts with PUF60 and JTV1. In terms of processing, ubiquitinated. This targets the protein for proteasome-mediated degradation.

It is found in the nucleus. Functionally, regulates MYC expression by binding to a single-stranded far-upstream element (FUSE) upstream of the MYC promoter. May act both as activator and repressor of transcription. The protein is Far upstream element-binding protein 1 of Rattus norvegicus (Rat).